The sequence spans 142 residues: Transcriptional regulator MraZ (142 aa).

SpoVT-AbrB domains are found at residues 5-47 (THTP…PAPE) and 76-119 (AHDE…DRVA).

It belongs to the MraZ family. As to quaternary structure, forms oligomers.

Its subcellular location is the cytoplasm. The protein resides in the nucleoid. The protein is Transcriptional regulator MraZ of Salinispora arenicola (strain CNS-205).